The sequence spans 319 residues: Olfactory receptor 56B4 (319 aa).

At 1-31 the chain is on the extracellular side; that stretch reads MDTSTSVTYDSSLQISQFILMGLPGIHEWQH. A helical transmembrane segment spans residues 32 to 52; that stretch reads WLSLPLTLLYLLALGANLLII. The Cytoplasmic portion of the chain corresponds to 53–60; the sequence is ITIQHETV. The chain crosses the membrane as a helical span at residues 61–81; sequence LHEPMYHLLGILAVVDIGLAT. The Extracellular segment spans residues 82–105; that stretch reads TIMPKILAIFWFDAKAISLPMCFA. Cys-103 and Cys-195 are disulfide-bonded. Residues 106–126 form a helical membrane-spanning segment; sequence QIYAIHCFFCIESGIFLCMAV. The Cytoplasmic portion of the chain corresponds to 127–145; sequence DRYIAICRPLQYPSIVTKA. Residues 146–166 form a helical membrane-spanning segment; it reads FVFKATGFIMLRNGLLTIPVP. Topologically, residues 167-202 are extracellular; that stretch reads ILAAQRHYCSRNEIEHCLCSNLGVISLACDDITVNK. Residues 203–223 traverse the membrane as a helical segment; the sequence is FYQLMLAWVLVGSDMALVFSS. At 224–243 the chain is on the cytoplasmic side; that stretch reads YAVILHSVLRLNSAEAMSKA. A helical transmembrane segment spans residues 244–263; it reads LSTCSSHLILILFHTGIIVL. Residues 264–277 are Extracellular-facing; sequence SVTHLAEKKIPLIP. A helical membrane pass occupies residues 278–298; the sequence is VFLNVLHNVIPPALNPLACAL. The Cytoplasmic portion of the chain corresponds to 299–319; the sequence is RMHKLRLGFQRLLGLGQDVSK.

The protein belongs to the G-protein coupled receptor 1 family.

It localises to the cell membrane. Functionally, odorant receptor. In Homo sapiens (Human), this protein is Olfactory receptor 56B4 (OR56B4).